Here is a 419-residue protein sequence, read N- to C-terminus: MQKNIIDELTWRDAINQQTDADGLRELTEKKSISLYCGVDPTGDSMHIGHLIPFMMMKRFQLAGHHPYIVIGGGTGSIGDPSGRKSERQLQTMEMVQHNVEALSGQMKRLFGEDANVSMVNNYDWLSKISLLDFLRDYGKLFNINTMLAKDVVASRLDVGISFTEFTYQILQSVDFMHLYKAHDVQLQIGGADQWGNITSGIDMIHKIEGSETEVYGLTIPLMLKADGTKFGKTAGGAIWLDPEKTTPYEFYQFWLNQDDRDVVKYLKYFTFLDEAEINELAKTVETAPEKREAQRRLAEEVTRFVHGQAELEGAQKITEVLFSGDIKALDVKEAEQAFQKAPTVEITAEKKNIVDFLVDAGIESSKRQAREDVQNGAITINGDRLRETTLEIDPSENFEGKFVIVRRGKKKYFLARVK.

An L-tyrosine-binding site is contributed by Tyr-36. The short motif at 41–50 is the 'HIGH' region element; sequence PTGDSMHIGH. Residues Tyr-168 and Gln-172 each contribute to the L-tyrosine site. Positions 230–234 match the 'KMSKS' region motif; the sequence is KFGKT. Lys-233 lines the ATP pocket. Residues 352 to 419 enclose the S4 RNA-binding domain; sequence KNIVDFLVDA…KKKYFLARVK (68 aa).

It belongs to the class-I aminoacyl-tRNA synthetase family. TyrS type 1 subfamily. In terms of assembly, homodimer.

It is found in the cytoplasm. It carries out the reaction tRNA(Tyr) + L-tyrosine + ATP = L-tyrosyl-tRNA(Tyr) + AMP + diphosphate + H(+). In terms of biological role, catalyzes the attachment of tyrosine to tRNA(Tyr) in a two-step reaction: tyrosine is first activated by ATP to form Tyr-AMP and then transferred to the acceptor end of tRNA(Tyr). This is Tyrosine--tRNA ligase from Latilactobacillus sakei subsp. sakei (strain 23K) (Lactobacillus sakei subsp. sakei).